The following is a 60-amino-acid chain: MRCLPVIVILLLLISSAAAVVEGPLRVNRRLRPRKAPVDMQARDWNWGRCCFLSGCFECW.

The N-terminal stretch at 1 to 19 (MRCLPVIVILLLLISSAAA) is a signal peptide. Positions 20-48 (VVEGPLRVNRRLRPRKAPVDMQARDWNWG) are excised as a propeptide.

This sequence belongs to the conotoxin T superfamily. Post-translationally, contains 2 disulfide bonds. In terms of tissue distribution, expressed by the venom duct.

The protein localises to the secreted. The polypeptide is Conotoxin Cl1.1 (Californiconus californicus (California cone)).